The primary structure comprises 140 residues: Nucleoside diphosphate kinase (140 aa).

Lys-11, Phe-59, Arg-87, Thr-93, Arg-104, and Asn-114 together coordinate ATP. His-117 serves as the catalytic Pros-phosphohistidine intermediate.

This sequence belongs to the NDK family. Homotetramer. It depends on Mg(2+) as a cofactor.

The protein resides in the cytoplasm. The enzyme catalyses a 2'-deoxyribonucleoside 5'-diphosphate + ATP = a 2'-deoxyribonucleoside 5'-triphosphate + ADP. The catalysed reaction is a ribonucleoside 5'-diphosphate + ATP = a ribonucleoside 5'-triphosphate + ADP. Functionally, major role in the synthesis of nucleoside triphosphates other than ATP. The ATP gamma phosphate is transferred to the NDP beta phosphate via a ping-pong mechanism, using a phosphorylated active-site intermediate. In Mesorhizobium japonicum (strain LMG 29417 / CECT 9101 / MAFF 303099) (Mesorhizobium loti (strain MAFF 303099)), this protein is Nucleoside diphosphate kinase.